Here is a 287-residue protein sequence, read N- to C-terminus: Phosphatidylserine decarboxylase proenzyme (287 aa).

Active-site charge relay system; for autoendoproteolytic cleavage activity residues include D89, H146, and S252. S252 (schiff-base intermediate with substrate; via pyruvic acid; for decarboxylase activity) is an active-site residue. S252 is subject to Pyruvic acid (Ser); by autocatalysis.

The protein belongs to the phosphatidylserine decarboxylase family. PSD-B subfamily. Prokaryotic type I sub-subfamily. Heterodimer of a large membrane-associated beta subunit and a small pyruvoyl-containing alpha subunit. The cofactor is pyruvate. Is synthesized initially as an inactive proenzyme. Formation of the active enzyme involves a self-maturation process in which the active site pyruvoyl group is generated from an internal serine residue via an autocatalytic post-translational modification. Two non-identical subunits are generated from the proenzyme in this reaction, and the pyruvate is formed at the N-terminus of the alpha chain, which is derived from the carboxyl end of the proenzyme. The autoendoproteolytic cleavage occurs by a canonical serine protease mechanism, in which the side chain hydroxyl group of the serine supplies its oxygen atom to form the C-terminus of the beta chain, while the remainder of the serine residue undergoes an oxidative deamination to produce ammonia and the pyruvoyl prosthetic group on the alpha chain. During this reaction, the Ser that is part of the protease active site of the proenzyme becomes the pyruvoyl prosthetic group, which constitutes an essential element of the active site of the mature decarboxylase.

It is found in the cell membrane. It carries out the reaction a 1,2-diacyl-sn-glycero-3-phospho-L-serine + H(+) = a 1,2-diacyl-sn-glycero-3-phosphoethanolamine + CO2. Its pathway is phospholipid metabolism; phosphatidylethanolamine biosynthesis; phosphatidylethanolamine from CDP-diacylglycerol: step 2/2. Its function is as follows. Catalyzes the formation of phosphatidylethanolamine (PtdEtn) from phosphatidylserine (PtdSer). In Shewanella sediminis (strain HAW-EB3), this protein is Phosphatidylserine decarboxylase proenzyme.